A 181-amino-acid polypeptide reads, in one-letter code: Inner membrane-spanning protein YciB (181 aa).

Helical transmembrane passes span 22 to 42 (IYTA…VTYA), 50 to 70 (MQLI…FLHD), 80 to 100 (IVYC…KPVI), 122 to 142 (WVLF…EMPL), and 148 to 168 (FKVF…GMYV).

The protein belongs to the YciB family.

The protein localises to the cell inner membrane. Plays a role in cell envelope biogenesis, maintenance of cell envelope integrity and membrane homeostasis. This Aliivibrio fischeri (strain ATCC 700601 / ES114) (Vibrio fischeri) protein is Inner membrane-spanning protein YciB.